Here is a 245-residue protein sequence, read N- to C-terminus: Ribonuclease 3 (245 aa).

The 130-residue stretch at 19 to 148 (FKVFQEKIGI…FIGALYLDQG (130 aa)) folds into the RNase III domain. Glu-61 provides a ligand contact to Mg(2+). Asp-65 is an active-site residue. Mg(2+) is bound by residues Asp-134 and Glu-137. The active site involves Glu-137. Residues 174–243 (DYKSQLQELI…AAEALKKLKE (70 aa)) enclose the DRBM domain.

The protein belongs to the ribonuclease III family. In terms of assembly, homodimer. Mg(2+) serves as cofactor.

The protein resides in the cytoplasm. The catalysed reaction is Endonucleolytic cleavage to 5'-phosphomonoester.. Digests double-stranded RNA. Involved in the processing of primary rRNA transcript to yield the immediate precursors to the large and small rRNAs (23S and 16S). Processes some mRNAs, and tRNAs when they are encoded in the rRNA operon. Processes pre-crRNA and tracrRNA of type II CRISPR loci if present in the organism. This Bacillus cereus (strain AH187) protein is Ribonuclease 3.